The sequence spans 147 residues: Large ribosomal subunit protein uL13 (147 aa).

The disordered stretch occupies residues 127 to 147 (GPEHPHSAQQPKVLEIQGAAR).

This sequence belongs to the universal ribosomal protein uL13 family. As to quaternary structure, part of the 50S ribosomal subunit.

In terms of biological role, this protein is one of the early assembly proteins of the 50S ribosomal subunit, although it is not seen to bind rRNA by itself. It is important during the early stages of 50S assembly. The protein is Large ribosomal subunit protein uL13 of Verminephrobacter eiseniae (strain EF01-2).